Here is a 972-residue protein sequence, read N- to C-terminus: RNA polymerase-associated protein RapA (972 aa).

Residues 164-334 enclose the Helicase ATP-binding domain; that stretch reads EVGRRYAPRV…FARLRLLDPD (171 aa). 177 to 184 contributes to the ATP binding site; sequence DEVGLGKT. Residues 280-283 carry the DEAH box motif; the sequence is DEAH. Residues 493-671 enclose the Helicase C-terminal domain; the sequence is RVNWLLEMLK…HEPEALENLI (179 aa).

This sequence belongs to the SNF2/RAD54 helicase family. RapA subfamily. In terms of assembly, interacts with the RNAP. Has a higher affinity for the core RNAP than for the holoenzyme. Its ATPase activity is stimulated by binding to RNAP.

Its function is as follows. Transcription regulator that activates transcription by stimulating RNA polymerase (RNAP) recycling in case of stress conditions such as supercoiled DNA or high salt concentrations. Probably acts by releasing the RNAP, when it is trapped or immobilized on tightly supercoiled DNA. Does not activate transcription on linear DNA. Probably not involved in DNA repair. This is RNA polymerase-associated protein RapA from Photobacterium profundum (strain SS9).